The chain runs to 475 residues: ATP synthase subunit beta (475 aa).

Gly155–Thr162 is a binding site for ATP.

The protein belongs to the ATPase alpha/beta chains family. F-type ATPases have 2 components, CF(1) - the catalytic core - and CF(0) - the membrane proton channel. CF(1) has five subunits: alpha(3), beta(3), gamma(1), delta(1), epsilon(1). CF(0) has three main subunits: a(1), b(2) and c(9-12). The alpha and beta chains form an alternating ring which encloses part of the gamma chain. CF(1) is attached to CF(0) by a central stalk formed by the gamma and epsilon chains, while a peripheral stalk is formed by the delta and b chains.

The protein resides in the cell inner membrane. The enzyme catalyses ATP + H2O + 4 H(+)(in) = ADP + phosphate + 5 H(+)(out). Its function is as follows. Produces ATP from ADP in the presence of a proton gradient across the membrane. The catalytic sites are hosted primarily by the beta subunits. In Rhizobium etli (strain CIAT 652), this protein is ATP synthase subunit beta.